Consider the following 828-residue polypeptide: MAGHGWGTAWVLVAAATLLHAGGLAQGDCWLIEGDKGFVWLAICSQNQPPYEAIPQQINNTIVDLRLNENRIRSVQYASLSRFGNLTYLNLTKNEIGYIEDGAFSGQFNLQVLQLGYNRLRNLTEGMLRGLSKLEYLYLQANLIEVVMASAFWECPNIVNIDLSMNRIQQLGSGTFAGLTKLSVCEIYSNPFYCSCELLGFLRWLAAFTNATQTHDRVQCESPPVYAGYFLLGQGRHGHQRSILSKLQSVCTEGSYTAEVLGPPRPVPGRSQPGHSPPPPPPEPSDMPCADDECFSGDGTTPLVILTTLVPQTEARPSMKVKQLTQNSATIMVQLPSPFNRMYTLEQYNNSKSFTVSKLTQPQEEIRLTNLYTLTNYTYCVVSTSSGTHHNHTCLTICLPKPPSPPGPVPSPSTATHYIMTILGCLFGMVLVLGAVYYCLRKRRRQEEKHKKAVAAAAGSLKKTIIELKYGPEIEAPGLAPLTQGPLLGPEAVTRIPYLPAATSDVEQYKLVESSETPKATKGNYIEVRTGEPQERRGCELSRPGEPQSSVAEISTIAKEVDRVNQIINNCIDALKSESTSFQGAKSGAVSAAEPQLVLLSEPLASKHSFLSPVYKDAFGHGGLQRHHSVEAAPGPPRASTSSSGSARSPRTFRAEATGTHKAPATETKYIEKSSPVPETILTVTPAATVLRAEADKSRQYGEHRHSYPGSHPAEPPAPPPPPPTHEGLGGRKASILEPLTRPRPRDLVYSQLSPQYHNLSYSSSPEYTCRASPSIWERLRLSRRRHKDDAEFMAAGHALRKKVQFAKDEDLHDILDYWKGVSAQHKS.

An N-terminal signal peptide occupies residues Met1 to Ala25. The Extracellular portion of the chain corresponds to Gln26–Tyr418. LRR repeat units lie at residues Thr61–Arg82, Asn85–Gly106, Asn109–Gly130, Lys133–Glu154, and Asn157–Gly178. N-linked (GlcNAc...) asparagine glycosylation is found at Asn85, Asn90, and Asn122. The LRRCT domain maps to Asn190–Glu253. Asn210 carries an N-linked (GlcNAc...) asparagine glycan. The segment at Ala258–Glu293 is disordered. The span at His275–Ser285 shows a compositional bias: pro residues. In terms of domain architecture, Fibronectin type-III spans Gln312–Leu399. An N-linked (GlcNAc...) asparagine glycan is attached at Asn376. A helical transmembrane segment spans residues Ile419 to Cys439. The Cytoplasmic segment spans residues Leu440–Ser828. Phosphoserine occurs at positions 460 and 646. 2 disordered regions span residues His627–Ser674 and Lys697–Gly731. The segment covering Arg638 to Thr652 has biased composition (low complexity). Basic and acidic residues predominate over residues Lys697 to His706. The segment covering Ala714–Thr725 has biased composition (pro residues).

Interacts with PPP1CA. In terms of tissue distribution, selectively expressed in perialvear somatostatin (Sst)-containing interneurons.

Its subcellular location is the membrane. The protein resides in the cell projection. It localises to the dendrite. In terms of biological role, postsynaptic protein that regulates circuit dynamics in the central nervous system by modulating the temporal dynamics of interneuron recruitment. Specifically present in excitatory synapses onto oriens-lacunosum molecular (OLM) interneurons and acts as a regulator of presynaptic release probability to direct the formation of highly facilitating pyramidal-OLM synapses. Inhibits phosphatase activity of protein phosphatase 1 (PP1) complexes. The chain is Protein ELFN1 (Elfn1) from Mus musculus (Mouse).